Here is a 354-residue protein sequence, read N- to C-terminus: Chorismate synthase (354 aa).

Residues Arg-48 and Arg-54 each coordinate NADP(+). FMN is bound by residues 125 to 127 (RSS), 238 to 239 (NA), Gly-278, 293 to 297 (KPTSS), and Arg-319.

This sequence belongs to the chorismate synthase family. In terms of assembly, homotetramer. FMNH2 serves as cofactor.

The enzyme catalyses 5-O-(1-carboxyvinyl)-3-phosphoshikimate = chorismate + phosphate. It participates in metabolic intermediate biosynthesis; chorismate biosynthesis; chorismate from D-erythrose 4-phosphate and phosphoenolpyruvate: step 7/7. In terms of biological role, catalyzes the anti-1,4-elimination of the C-3 phosphate and the C-6 proR hydrogen from 5-enolpyruvylshikimate-3-phosphate (EPSP) to yield chorismate, which is the branch point compound that serves as the starting substrate for the three terminal pathways of aromatic amino acid biosynthesis. This reaction introduces a second double bond into the aromatic ring system. This is Chorismate synthase from Blochmanniella pennsylvanica (strain BPEN).